The sequence spans 503 residues: Glutamate--tRNA ligase (503 aa).

The short motif at 14–24 (PSPTGSLHIGG) is the 'HIGH' region element. A 'KMSKS' region motif is present at residues 261 to 265 (KLSKR). Lys-264 provides a ligand contact to ATP.

It belongs to the class-I aminoacyl-tRNA synthetase family. Glutamate--tRNA ligase type 1 subfamily. Monomer.

Its subcellular location is the cytoplasm. The enzyme catalyses tRNA(Glu) + L-glutamate + ATP = L-glutamyl-tRNA(Glu) + AMP + diphosphate. In terms of biological role, catalyzes the attachment of glutamate to tRNA(Glu) in a two-step reaction: glutamate is first activated by ATP to form Glu-AMP and then transferred to the acceptor end of tRNA(Glu). In Chloroflexus aurantiacus (strain ATCC 29366 / DSM 635 / J-10-fl), this protein is Glutamate--tRNA ligase.